A 258-amino-acid polypeptide reads, in one-letter code: Intron-associated endonuclease 2 (258 aa).

The region spanning 14–96 (SVAFTYMVRF…RKYFNNEFIL (83 aa)) is the GIY-YIG domain.

This endonuclease is specific to the nrdD gene splice junction and is involved in intron homing. This chain is Intron-associated endonuclease 2 (ITEVIIR), found in Escherichia coli (Bacteriophage T4).